The chain runs to 384 residues: Ubiquitin-like modifier-activating enzyme 5 (384 aa).

Residues G63, D84, K107, N130, and N164 each coordinate ATP. Residues C206 and C209 each contribute to the Zn(2+) site. The active-site Glycyl thioester intermediate is C230. The Zn(2+) site is built by C283 and C288. Residues 352–375 are disordered; that stretch reads EAPEKSSAEATQAATAPVDDTSLE.

The protein belongs to the ubiquitin-activating E1 family. UBA5 subfamily.

In terms of biological role, E1-like enzyme which activates UFM1. This chain is Ubiquitin-like modifier-activating enzyme 5, found in Drosophila persimilis (Fruit fly).